A 273-amino-acid chain; its full sequence is 4-hydroxy-tetrahydrodipicolinate reductase (273 aa).

Residues 12–17 (GAGGRM) and Glu38 each bind NAD(+). Arg39 serves as a coordination point for NADP(+). Residues 102–104 (GTT) and 126–129 (AANF) contribute to the NAD(+) site. The Proton donor/acceptor role is filled by His159. His160 contacts (S)-2,3,4,5-tetrahydrodipicolinate. Residue Lys163 is the Proton donor of the active site. (S)-2,3,4,5-tetrahydrodipicolinate is bound at residue 169 to 170 (GT).

The protein belongs to the DapB family. In terms of assembly, homotetramer.

It is found in the cytoplasm. It catalyses the reaction (S)-2,3,4,5-tetrahydrodipicolinate + NAD(+) + H2O = (2S,4S)-4-hydroxy-2,3,4,5-tetrahydrodipicolinate + NADH + H(+). The catalysed reaction is (S)-2,3,4,5-tetrahydrodipicolinate + NADP(+) + H2O = (2S,4S)-4-hydroxy-2,3,4,5-tetrahydrodipicolinate + NADPH + H(+). It functions in the pathway amino-acid biosynthesis; L-lysine biosynthesis via DAP pathway; (S)-tetrahydrodipicolinate from L-aspartate: step 4/4. Functionally, catalyzes the conversion of 4-hydroxy-tetrahydrodipicolinate (HTPA) to tetrahydrodipicolinate. The polypeptide is 4-hydroxy-tetrahydrodipicolinate reductase (Escherichia coli (strain K12 / MC4100 / BW2952)).